We begin with the raw amino-acid sequence, 558 residues long: uncharacterized protein (558 aa).

5 consecutive transmembrane segments (helical) span residues 15-32 (PSVT…ALGL), 39-61 (IGTI…HFGV), 76-95 (LVIF…FPSL), 104-126 (LISL…ILGI), and 166-188 (MALA…LALL). 2 consecutive RCK C-terminal domains span residues 196-278 (EERD…LFGK) and 286-370 (RPDI…ILGD). A run of 5 helical transmembrane segments spans residues 383-405 (LFGG…GVSM), 409-426 (LGLA…GAFG), 446-468 (FGII…DTII), 473-495 (LLWV…WASI), and 533-555 (VVYA…IMIL).

It belongs to the AAE transporter (TC 2.A.81) family.

The protein resides in the cell membrane. This is an uncharacterized protein from Porphyromonas gingivalis (strain ATCC BAA-308 / W83).